Here is a 292-residue protein sequence, read N- to C-terminus: 4-hydroxy-tetrahydrodipicolinate synthase (292 aa).

Residue Thr45 participates in pyruvate binding. Tyr133 functions as the Proton donor/acceptor in the catalytic mechanism. Lys161 (schiff-base intermediate with substrate) is an active-site residue. Ile203 provides a ligand contact to pyruvate.

This sequence belongs to the DapA family. Homotetramer; dimer of dimers.

It is found in the cytoplasm. The enzyme catalyses L-aspartate 4-semialdehyde + pyruvate = (2S,4S)-4-hydroxy-2,3,4,5-tetrahydrodipicolinate + H2O + H(+). The protein operates within amino-acid biosynthesis; L-lysine biosynthesis via DAP pathway; (S)-tetrahydrodipicolinate from L-aspartate: step 3/4. Catalyzes the condensation of (S)-aspartate-beta-semialdehyde [(S)-ASA] and pyruvate to 4-hydroxy-tetrahydrodipicolinate (HTPA). The protein is 4-hydroxy-tetrahydrodipicolinate synthase of Salmonella typhi.